The sequence spans 187 residues: Large ribosomal subunit protein uL22 (187 aa).

The interval 155–187 is disordered; sequence DAVSRAAPTDDAPAKKKLSKKKLARQKEKMMRE. A compositionally biased stretch (basic residues) spans 169–178; sequence KKKLSKKKLA.

The protein belongs to the universal ribosomal protein uL22 family.

The sequence is that of Large ribosomal subunit protein uL22 (RpL17) from Lonomia obliqua (Moth).